A 276-amino-acid polypeptide reads, in one-letter code: Diaminopimelate epimerase (276 aa).

3 residues coordinate substrate: Asn-13, Gln-46, and Asn-66. The active-site Proton donor is the Cys-75. Substrate-binding positions include 76-77 (GN), Asn-159, Asn-192, and 210-211 (ER). Cys-219 functions as the Proton acceptor in the catalytic mechanism. Position 220 to 221 (220 to 221 (GT)) interacts with substrate.

It belongs to the diaminopimelate epimerase family. Homodimer.

Its subcellular location is the cytoplasm. It catalyses the reaction (2S,6S)-2,6-diaminopimelate = meso-2,6-diaminopimelate. Its pathway is amino-acid biosynthesis; L-lysine biosynthesis via DAP pathway; DL-2,6-diaminopimelate from LL-2,6-diaminopimelate: step 1/1. Functionally, catalyzes the stereoinversion of LL-2,6-diaminopimelate (L,L-DAP) to meso-diaminopimelate (meso-DAP), a precursor of L-lysine and an essential component of the bacterial peptidoglycan. This chain is Diaminopimelate epimerase, found in Pseudomonas savastanoi pv. phaseolicola (strain 1448A / Race 6) (Pseudomonas syringae pv. phaseolicola (strain 1448A / Race 6)).